Here is a 417-residue protein sequence, read N- to C-terminus: Metal-binding activator 1 (417 aa).

The segment at residues 1–40 is a DNA-binding region (copper-fist); it reads MIIFNGNKYACASCIRGHRSSTCRHSHRMLIKVRTRGRPS. Residues cysteine 11, cysteine 14, cysteine 23, and histidine 25 each coordinate Zn(2+). Disordered regions lie at residues 128-198 and 216-242; these read FLRK…IFTP and YNSSVPGAHDSSETLTPQSTTTIAAPH. Residue serine 143 is modified to Phosphoserine. Positions 153-178 are enriched in basic and acidic residues; the sequence is SEKKERSRLQQEPIRHFSNCCKKDKS. 2 stretches are compositionally biased toward polar residues: residues 179–190 and 228–238; these read QNPASNGKTNKA and ETLTPQSTTTI. Tandem repeats lie at residues 264 to 279 and 322 to 337. The interval 264–337 is 2 X 16 AA repeat of C-X-C-X(4)-C-X-C-X-X-C-X-X-H; that stretch reads CSCEDESCPC…NCTCDGCFSH (74 aa).

The protein localises to the nucleus. Its function is as follows. Regulatory protein involved in Cu/Fe utilization and stress resistance. Involved in basal level transcription of FRE1 and H(2)O(2)-induced transcription of CTT1. Regulates the transcription of CTR1 and CTR3 via the copper ion responsive elements in their promoters. Required for degradation of CTR1. This Saccharomyces cerevisiae (strain ATCC 204508 / S288c) (Baker's yeast) protein is Metal-binding activator 1 (MAC1).